The sequence spans 61 residues: Potassium channel toxin alpha-KTx 6.7 (61 aa).

The signal sequence occupies residues 1–23 (MNAKFILLLLVVTTTMLLPDTQG). 4 disulfide bridges follow: cysteine 29-cysteine 50, cysteine 35-cysteine 55, cysteine 39-cysteine 57, and cysteine 45-cysteine 60. Cysteine 60 bears the Cysteine amide mark.

It belongs to the short scorpion toxin superfamily. Potassium channel inhibitor family. Alpha-KTx 06 subfamily. As to expression, expressed by the venom gland.

It localises to the secreted. Blocker of voltage-gated potassium channels. The protein is Potassium channel toxin alpha-KTx 6.7 of Opistophthalmus carinatus (African yellow leg scorpion).